Consider the following 82-residue polypeptide: MRNIKMPKRLLQGVVISSKADKTVTVKVERKFKHPIYKKFVKVSKKYAAHDSENKYQEGDKVSIIESRPISKTKTWVVVNGE.

Belongs to the universal ribosomal protein uS17 family. As to quaternary structure, part of the 30S ribosomal subunit.

Its function is as follows. One of the primary rRNA binding proteins, it binds specifically to the 5'-end of 16S ribosomal RNA. This chain is Small ribosomal subunit protein uS17, found in Rickettsia rickettsii (strain Iowa).